The following is a 35-amino-acid chain: Conotoxin M11.2 (35 aa).

4 disulfides stabilise this stretch: Cys2-Cys16, Cys9-Cys21, Cys15-Cys26, and Cys20-Cys33.

Belongs to the conotoxin I1 superfamily. Expressed by the venom duct.

It localises to the secreted. This Conus magus (Magical cone) protein is Conotoxin M11.2.